A 261-amino-acid chain; its full sequence is uncharacterized protein (261 aa).

Residues 16 to 147 (KQTSLVLQNL…QTNVNVLRSQ (132 aa)) are a coiled coil.

The protein localises to the cytoplasm. This is an uncharacterized protein from Schizosaccharomyces pombe (strain 972 / ATCC 24843) (Fission yeast).